A 404-amino-acid chain; its full sequence is Cytoplasmic tRNA 2-thiolation protein 2 (404 aa).

This sequence belongs to the CTU2/NCS2 family.

It is found in the cytoplasm. It functions in the pathway tRNA modification; 5-methoxycarbonylmethyl-2-thiouridine-tRNA biosynthesis. Functionally, plays a central role in 2-thiolation of mcm(5)S(2)U at tRNA wobble positions of tRNA(Lys), tRNA(Glu) and tRNA(Gln). May act by forming a heterodimer with NCS6/CTU1 that ligates sulfur from thiocarboxylated URM1 onto the uridine of tRNAs at wobble position. In Drosophila erecta (Fruit fly), this protein is Cytoplasmic tRNA 2-thiolation protein 2.